A 101-amino-acid polypeptide reads, in one-letter code: Small ribosomal subunit protein uS14 (101 aa).

The protein belongs to the universal ribosomal protein uS14 family. As to quaternary structure, part of the 30S ribosomal subunit. Contacts proteins S3 and S10.

Functionally, binds 16S rRNA, required for the assembly of 30S particles and may also be responsible for determining the conformation of the 16S rRNA at the A site. This chain is Small ribosomal subunit protein uS14, found in Actinobacillus succinogenes (strain ATCC 55618 / DSM 22257 / CCUG 43843 / 130Z).